We begin with the raw amino-acid sequence, 62 residues long: Large ribosomal subunit protein bL32 (62 aa).

The protein belongs to the bacterial ribosomal protein bL32 family.

This Levilactobacillus brevis (strain ATCC 367 / BCRC 12310 / CIP 105137 / JCM 1170 / LMG 11437 / NCIMB 947 / NCTC 947) (Lactobacillus brevis) protein is Large ribosomal subunit protein bL32.